The primary structure comprises 2812 residues: Serine/threonine-protein kinase tel1 (2812 aa).

One can recognise an FAT domain in the interval 1773–2347; that stretch reads VAASTAYDCH…LHVLFSLVSN (575 aa). Residues 2449 to 2758 enclose the PI3K/PI4K catalytic domain; it reads FDDTIHFASG…DASRDPKIQR (310 aa). The segment at 2455-2461 is G-loop; it reads FASGINA. A catalytic loop region spans residues 2627–2635; it reads GLGDRHGQN. Residues 2647–2671 form an activation loop region; that stretch reads HIDLGIAFEQGKKLPVPECVPFRLT. The span at 2739 to 2749 shows a compositional bias: polar residues; that stretch reads NQPESGNITTD. The segment at 2739 to 2763 is disordered; the sequence is NQPESGNITTDASRDPKIQRNNVSG. The FATC domain maps to 2780-2812; the sequence is STLSVEASVGELIRIAQDPSYLALMFCGWSAFQ.

The protein belongs to the PI3/PI4-kinase family. ATM subfamily. Interacts with nbs1. This interaction is required for phosphorylation of histone H2A.

The protein resides in the nucleus. The protein localises to the chromosome. It localises to the telomere. It catalyses the reaction L-seryl-[protein] + ATP = O-phospho-L-seryl-[protein] + ADP + H(+). The enzyme catalyses L-threonyl-[protein] + ATP = O-phospho-L-threonyl-[protein] + ADP + H(+). Serine/threonine protein kinase which activates checkpoint signaling upon genotoxic stresses such as ionizing radiation (IR), ultraviolet light (UV), or DNA replication stalling, thereby acting as a DNA damage sensor. Recognizes the substrate consensus sequence [ST]-Q. Phosphorylates histone H2A to form H2AS128ph (gamma-H2A) at sites of DNA damage, involved in the regulation of DNA damage response mechanism. Undirectly involved in the phosphorylation of rad32 which is necessary for its telomere function. Required for the control of telomere length and genome stability. The polypeptide is Serine/threonine-protein kinase tel1 (tel1) (Schizosaccharomyces pombe (strain 972 / ATCC 24843) (Fission yeast)).